A 520-amino-acid chain; its full sequence is Nonsense-mediated mRNA decay factor SMG9 (520 aa).

The disordered stretch occupies residues Met-1–Thr-143. Position 2 is an N-acetylserine (Ser-2). Phosphoserine occurs at positions 2, 4, 7, 32, and 53. Basic and acidic residues predominate over residues Gly-36–Ser-53. 2 stretches are compositionally biased toward pro residues: residues Gln-78–Leu-94 and Thr-122–Pro-133. Position 451 is a phosphoserine (Ser-451).

This sequence belongs to the SMG9 family. As to quaternary structure, self-associates to form homodimers and forms heterodimers with SMG8; these assembly forms may represent SMG1C intermediate forms. Component of the SMG1C complex composed of SMG1, SMG8 and SMG9. Interacts with DHX34; the interaction is RNA-independent. In terms of processing, phosphorylated by SMG1.

In terms of biological role, involved in nonsense-mediated decay (NMD) of mRNAs containing premature stop codons. Is recruited by release factors to stalled ribosomes together with SMG1 and SMG8 (forming the SMG1C protein kinase complex) and, in the SMG1C complex, is required for the efficient association between SMG1 and SMG8. Plays a role in brain, heart, and eye development. The sequence is that of Nonsense-mediated mRNA decay factor SMG9 from Mus musculus (Mouse).